Reading from the N-terminus, the 197-residue chain is Fucoxanthin-chlorophyll a-c binding protein C, chloroplastic (197 aa).

Residues 1-31 (MKTAVIASLIAGAAAFAPAKNAARTSVATNM) constitute a chloroplast transit peptide. The next 3 helical transmembrane spans lie at 73-94 (ISML…PGTI), 113-133 (IPAG…SSVM), and 174-196 (GRAA…SLLP).

This sequence belongs to the fucoxanthin chlorophyll protein family. The LHC complex of chromophytic algae is composed of fucoxanthin, chlorophyll A and C bound non-covalently by fucoxanthin chlorophyll proteins (FCPs). The ratio of the pigments in LHC; fucoxanthin: chlorophyll C: chlorophyll A; (0.6-1): (0.1-0.3): (1).

The protein resides in the plastid. It is found in the chloroplast thylakoid membrane. In terms of biological role, the light-harvesting complex (LHC) functions as a light receptor, it captures and delivers excitation energy to photosystems with which it is closely associated. Energy is transferred from the carotenoid and chlorophyll C (or B) to chlorophyll A and the photosynthetic reaction centers where it is used to synthesize ATP and reducing power. The polypeptide is Fucoxanthin-chlorophyll a-c binding protein C, chloroplastic (FCPC) (Phaeodactylum tricornutum (Diatom)).